A 520-amino-acid chain; its full sequence is Succinyl-CoA:3-ketoacid coenzyme A transferase 2B, mitochondrial (520 aa).

Residues 1-39 (MAALRLLAWALPRGVSALRPRPALPHRLIRRYVSDRSGS) constitute a mitochondrion transit peptide. A disordered region spans residues 280 to 299 (ERLTTRDSKPAPGSKDNDPS). Glu342 serves as the catalytic 5-glutamyl coenzyme A thioester intermediate.

It belongs to the 3-oxoacid CoA-transferase family. Homodimer. In terms of tissue distribution, testis specific. Expressed in late spermatids. Accumulates during spermiogenesis. Also detected in the midpiece of spermatozoa.

Its subcellular location is the mitochondrion. It carries out the reaction a 3-oxo acid + succinyl-CoA = a 3-oxoacyl-CoA + succinate. It functions in the pathway ketone metabolism; succinyl-CoA degradation; acetoacetyl-CoA from succinyl-CoA: step 1/1. Its function is as follows. Key enzyme for ketone body catabolism. Transfers the CoA moiety from succinate to acetoacetate. Formation of the enzyme-CoA intermediate proceeds via an unstable anhydride species formed between the carboxylate groups of the enzyme and substrate. Probably play and important roles in the energy metabolism of spermatozoa. This chain is Succinyl-CoA:3-ketoacid coenzyme A transferase 2B, mitochondrial (Oxct2b), found in Mus musculus (Mouse).